A 176-amino-acid chain; its full sequence is Isopentenyl-diphosphate Delta-isomerase 1 (176 aa).

Mn(2+) contacts are provided by His-23 and His-30. Residues 28–162 form the Nudix hydrolase domain; sequence HLHRAFSCFI…EEFCTPWFKK (135 aa). The active site involves Cys-65. Residue Cys-65 participates in Mg(2+) binding. Mn(2+) is bound at residue His-67. Glu-85 contacts Mg(2+). Residues Glu-112 and Glu-114 each coordinate Mn(2+). The active site involves Glu-114.

This sequence belongs to the IPP isomerase type 1 family. In terms of assembly, homodimer. Requires Mg(2+) as cofactor. The cofactor is Mn(2+).

It localises to the cytoplasm. The catalysed reaction is isopentenyl diphosphate = dimethylallyl diphosphate. Its pathway is isoprenoid biosynthesis; dimethylallyl diphosphate biosynthesis; dimethylallyl diphosphate from isopentenyl diphosphate: step 1/1. Catalyzes the 1,3-allylic rearrangement of the homoallylic substrate isopentenyl (IPP) to its highly electrophilic allylic isomer, dimethylallyl diphosphate (DMAPP). The chain is Isopentenyl-diphosphate Delta-isomerase 1 from Photorhabdus laumondii subsp. laumondii (strain DSM 15139 / CIP 105565 / TT01) (Photorhabdus luminescens subsp. laumondii).